A 205-amino-acid chain; its full sequence is Probable GTP-binding protein EngB (205 aa).

An EngB-type G domain is found at 22–196 (NLPEVAFVGR…LKVLDEFIHK (175 aa)). GTP is bound by residues 30 to 37 (GRSNVGKS), 57 to 61 (GRTQL), 76 to 79 (DLPG), 143 to 146 (TKVD), and 175 to 177 (FSA). Mg(2+) is bound by residues Ser37 and Thr59.

Belongs to the TRAFAC class TrmE-Era-EngA-EngB-Septin-like GTPase superfamily. EngB GTPase family. Requires Mg(2+) as cofactor.

In terms of biological role, necessary for normal cell division and for the maintenance of normal septation. This chain is Probable GTP-binding protein EngB, found in Desulforamulus reducens (strain ATCC BAA-1160 / DSM 100696 / MI-1) (Desulfotomaculum reducens).